Consider the following 124-residue polypeptide: Large ribosomal subunit protein bL12 (124 aa).

Belongs to the bacterial ribosomal protein bL12 family. In terms of assembly, homodimer. Part of the ribosomal stalk of the 50S ribosomal subunit. Forms a multimeric L10(L12)X complex, where L10 forms an elongated spine to which 2 to 4 L12 dimers bind in a sequential fashion. Binds GTP-bound translation factors.

Functionally, forms part of the ribosomal stalk which helps the ribosome interact with GTP-bound translation factors. Is thus essential for accurate translation. This is Large ribosomal subunit protein bL12 from Herminiimonas arsenicoxydans.